A 523-amino-acid polypeptide reads, in one-letter code: DELLA protein RGL3 (523 aa).

The interval 1 to 28 is disordered; it reads MKRSHQETSVEEEAPSMVEKLENGCGGG. Residues 34–38 carry the DELLA motif motif; it reads DEFLA. Residues 56 to 60 carry the LEXLE motif motif; that stretch reads LEQLE. The VHYNP motif motif lies at 78 to 82; sequence VHYNP. The region spanning 148 to 516 is the GRAS domain; that stretch reads VLIEETGVRL…KPLIAASAWK (369 aa). The tract at residues 155–209 is leucine repeat I (LRI); that stretch reads VRLVQALVACAEAVQLENLSLADALVKRVGLLAASQAGAMGKVATYFAEALARRI. The VHIID stretch occupies residues 228–293; it reads QMNFYDSCPY…GGPPSFRLTG (66 aa). The short motif at 259-263 is the VHIID element; sequence VHVID. A leucine repeat II (LRII) region spans residues 305 to 337; the sequence is ELGWKLAQLAQAIGVEFKFNGLTTERLSDLEPD. Residues 348-437 form a PFYRE region; the sequence is LVVNSVFELH…EVYLGRQILN (90 aa). The short motif at 356 to 360 is the LXXLL motif element; the sequence is LHPVL. The interval 440–516 is SAW; the sequence is ATEGSDRIER…KPLIAASAWK (77 aa).

It belongs to the GRAS family. DELLA subfamily. In terms of assembly, interacts directly with the GID2/SLY1 component of the SCF(GID2) complex, suggesting that it may be ubiquitinated. Interacts (via N-terminus) with GID1A, GID1B and GID1B (via N-terminus). Interacts with the BOI proteins BOI, BRG1, BRG2 and BRG3. In terms of processing, phosphorylated. Post-translationally, may be ubiquitinated. Expressed at very low level. Mainly expressed in germinating seeds and flowers and siliques. Not expressed in other tissues.

The protein localises to the nucleus. Functionally, probable transcriptional regulator that acts as a repressor of the gibberellin (GA) signaling pathway. No effect of the BOI proteins on its stability. Probably acts by participating in large multiprotein complexes that repress transcription of GA-inducible genes. Its activity may be regulated by phytohormones such as auxin and ethylene. The polypeptide is DELLA protein RGL3 (RGL3) (Arabidopsis thaliana (Mouse-ear cress)).